The primary structure comprises 895 residues: Isoleucine--tRNA ligase (895 aa).

Positions 57 to 67 (PYANGSIHVGH) match the 'HIGH' region motif. L-isoleucyl-5'-AMP is bound at residue Glu549. The short motif at 590–594 (KMSKS) is the 'KMSKS' region element. Lys593 serves as a coordination point for ATP. Zn(2+) is bound by residues Cys869, Cys872, Cys888, and Cys891.

This sequence belongs to the class-I aminoacyl-tRNA synthetase family. IleS type 1 subfamily. Monomer. It depends on Zn(2+) as a cofactor.

Its subcellular location is the cytoplasm. The catalysed reaction is tRNA(Ile) + L-isoleucine + ATP = L-isoleucyl-tRNA(Ile) + AMP + diphosphate. Catalyzes the attachment of isoleucine to tRNA(Ile). As IleRS can inadvertently accommodate and process structurally similar amino acids such as valine, to avoid such errors it has two additional distinct tRNA(Ile)-dependent editing activities. One activity is designated as 'pretransfer' editing and involves the hydrolysis of activated Val-AMP. The other activity is designated 'posttransfer' editing and involves deacylation of mischarged Val-tRNA(Ile). The sequence is that of Isoleucine--tRNA ligase from Mycoplasma genitalium (strain ATCC 33530 / DSM 19775 / NCTC 10195 / G37) (Mycoplasmoides genitalium).